The sequence spans 508 residues: p-aminobenzoyl-glutamate transport protein (508 aa).

13 helical membrane-spanning segments follow: residues 30–50 (FLLF…LSAF), 85–105 (FSGF…GLAE), 121–139 (VNAR…FSHI), 140–159 (SSDA…FLAV), 164–184 (VAGL…NLLI), 211–231 (IDNW…GGLI), 261–281 (GLRI…LMVI), 303–323 (GIVP…GIAT), 343–363 (MAGF…FNWS), 382–402 (LSGI…CMFI), 405–425 (GSAI…LLGF), 439–459 (SSVL…GFLQ), and 479–499 (LIFL…GLPI).

The protein resides in the cell inner membrane. It carries out the reaction N-(4-aminobenzoyl)-L-glutamate(in) + H(+)(in) = N-(4-aminobenzoyl)-L-glutamate(out) + H(+)(out). With respect to regulation, completely inhibited by 100 nM sodium azide and by the proton ionophore carbonyl cyanide m-chlorophenylhydrazone (CCCP). Is also strongly inhibited by 100 mM potassium fluoride. In terms of biological role, essential for aminobenzoyl-glutamate utilization. It catalyzes the concentration-dependent uptake of p-aminobenzoyl-glutamate (PABA-GLU) into the cell and allows accumulation of PABA-GLU to a concentration enabling AbgAB to catalyze cleavage into p-aminobenzoate and glutamate. It also seems to increase the sensitivity to low levels of aminobenzoyl-glutamate. May actually serve physiologically as a transporter for some other molecule, perhaps a dipeptide, and that it transports p-aminobenzoyl-glutamate as a secondary activity. The physiological role of abgABT should be clarified. In Escherichia coli (strain K12), this protein is p-aminobenzoyl-glutamate transport protein.